The chain runs to 271 residues: uncharacterized protein (271 aa).

This sequence belongs to the HAD-like hydrolase superfamily.

This is an uncharacterized protein from Staphylococcus aureus.